The sequence spans 359 residues: Phosphoribosylformylglycinamidine cyclo-ligase (359 aa).

This sequence belongs to the AIR synthase family.

The protein localises to the cytoplasm. It carries out the reaction 2-formamido-N(1)-(5-O-phospho-beta-D-ribosyl)acetamidine + ATP = 5-amino-1-(5-phospho-beta-D-ribosyl)imidazole + ADP + phosphate + H(+). The protein operates within purine metabolism; IMP biosynthesis via de novo pathway; 5-amino-1-(5-phospho-D-ribosyl)imidazole from N(2)-formyl-N(1)-(5-phospho-D-ribosyl)glycinamide: step 2/2. This is Phosphoribosylformylglycinamidine cyclo-ligase from Brucella melitensis biotype 2 (strain ATCC 23457).